The chain runs to 661 residues: MKFTRTLVLASTSLLATVATSQAQEVKRDTKKQGEVVLKPITIISHGKDNIEATGGTVLTYKDIEKLQPANVSELFSRQSSIAVSGGGGPSKRIHVLGMEQSNLAVSVDGVPQTATSWHHTGSNVIDPAFLKRVEVEAGAAAADSGFGAAAGAIRYETVNALDLLEPGKTFGARIIGSYGTNGRGFSGSTAAYGLKDGFDWLLMLHGTSGHNYKNGDGTEILGTEPAARNILGKAGYEFDGNRIDIGYERSRDKADRLIKMNMGLPGDTEYPLEVARDSVNIKYTRTDATDMWDPEVQFYYNRNDYWRNDYQNRTNGNMILKEDLYGGKLQNTFTIDYGKITAGIDFGKHDYNTDNYGHNDRRYRKFNTQQVGAFTQGRFEFDNGFSLSTGARYDYSRFADWNDEVFSDSGASVNGTLSYKFNEHIEVFAGASRTWLGYVLGDYGYVHARNNAFYTDPTFSPGRARNYKAGVNFGGADWSAGITLFDTRIAGLPNYDSQKLGNDPEEYRSRGFTLNARYIWNYTTIGATFTKAKVTAGDDPVLPNSGSFMPIGDMATLFIDQEIPDYNMKVGATLAWAGRISDEAATAANFYDQPAYTVVNAYAEWNPPAVKNMTLRVGVENLFNENYYERTSFAPSQNRGGIDAVWAPGRTFTFQTAFKF.

The signal sequence occupies residues M1–A23. Residues K48–V159 form the TBDR plug domain. In terms of domain architecture, TBDR beta-barrel spans T170–F661.

The protein belongs to the TonB-dependent receptor family.

Its subcellular location is the cell outer membrane. In terms of biological role, heme transporter. The chain is Heme transporter BhuA (bhuA) from Brucella abortus biovar 1 (strain 9-941).